The following is a 526-amino-acid chain: MGNTYGLEGLGLINPGNIYRNLPVARLVEMALARGEGVLASNGALSVRTGKYTGRSPNDRFMVDTPSVHDTISWGAVNQPLEEARFEALFRRLAAYLQGRDLFIFDGFVGADPAYRMPIRVVNQYAWQNLFVHQLFVRPSAAELEAHEPQFTVICAPGFQATPEVDGTRSEAFVVLNFDRRLIIIGGTSYAGEMKKSIFTVMNYLLPERGVCPMHCSANMGPAGDTALFFGLSGTGKTTLSADPERRLIGDDEHGWSDHGIFNFEGGCYAKCIKLSAEHEPQIWNAIRFGSVLENVAVDPDSRAIDYDCDALTENTRAAYPVDFIPNAVIPGIGGHPRTVVFLTADAFGVMPPIAKLTREQAMYHFLSGYTSKLAGTERGITDPQATFSTCFGAPFLPRSPRVYADLLGERIAKHGASVYLVNTGWTGGPSGIGRRMSLPYTRAMVRAAIKGELEGVEFVPDPVFGILVPTSCPGVPAEVLNPRHTWQDKEKYDAMARKLAGLFAENFTKFRDVPEEIRAAGPVVR.

Residues arginine 55, tyrosine 190, and lysine 196 each coordinate substrate. ATP is bound by residues lysine 196, histidine 215, and 231 to 239 (GLSGTGKTT). Lysine 196 and histidine 215 together coordinate Mn(2+). Aspartate 252 is a binding site for Mn(2+). ATP-binding residues include glutamate 280, arginine 317, and threonine 442. Residue arginine 317 coordinates substrate.

Belongs to the phosphoenolpyruvate carboxykinase (ATP) family. It depends on Mn(2+) as a cofactor.

Its subcellular location is the cytoplasm. The catalysed reaction is oxaloacetate + ATP = phosphoenolpyruvate + ADP + CO2. Its pathway is carbohydrate biosynthesis; gluconeogenesis. Its function is as follows. Involved in the gluconeogenesis. Catalyzes the conversion of oxaloacetate (OAA) to phosphoenolpyruvate (PEP) through direct phosphoryl transfer between the nucleoside triphosphate and OAA. The chain is Phosphoenolpyruvate carboxykinase (ATP) 2 from Moorella thermoacetica (strain ATCC 39073 / JCM 9320).